The sequence spans 158 residues: C-type lectin BML-1 (158 aa).

Residues 1 to 23 (MGHFTFTGLCLLAMFLSLRGAEC) form the signal peptide. 4 cysteine pairs are disulfide-bonded: C26–C37, C54–C154, C61–C156, and C129–C146. One can recognise a C-type lectin domain in the interval 33-155 (KNGLCYKVFS…CAALRPFLCQ (123 aa)). Residues Q119, D121, and E127 each contribute to the Ca(2+) site. The Galactose-binding motif lies at 119–121 (QPD). N-linked (GlcNAc...) asparagine glycosylation is present at N134. N142 and D143 together coordinate Ca(2+).

Belongs to the true venom lectin family. As to quaternary structure, homodimer; non-covalently linked. As to expression, expressed by the venom gland.

It localises to the secreted. Recombinant C-type lectin BML-1 is able to agglutinate erythrocytes. May be a calcium-dependent lectin. The polypeptide is C-type lectin BML-1 (Bungarus multicinctus (Many-banded krait)).